Here is a 99-residue protein sequence, read N- to C-terminus: CLAVATA3/ESR (CLE)-related protein 41 (99 aa).

The first 34 residues, 1–34, serve as a signal peptide directing secretion; that stretch reads MATSNDQTNTKSSHSRTLLLLFIFLSLLLFSSLT. Residues 60-99 are disordered; the sequence is ASSTMDLRPKASTRRSRTSRRREFGNDAHEVPSGPNPISN. Residues 70–79 are compositionally biased toward basic residues; that stretch reads ASTRRSRTSR. The segment covering 80–89 has biased composition (basic and acidic residues); it reads RREFGNDAHE. A hydroxyproline mark is found at proline 91 and proline 94. O-linked (Ara...) hydroxyproline glycosylation is present at proline 94.

Belongs to the CLV3/ESR signal peptide family. In terms of assembly, CLE41p interacts specifically with the leucine-rich repeat receptor-like protein kinase TDR. The O-glycosylation (arabinosylation) of the hydroxyproline Pro-94 enhances binding affinity of the CLE41p peptide for its receptor. Mostly expressed in inflorescence and roots, and, to a lower extent, in seedlings, flowers, leaves and siliques. Observed along the vascular strands in cotyledons, leaves and roots, but not in shoot apical meristems (SAM). Restricted to the phloem and the neighboring pericycle cells in the roots and hypocotyls.

The protein resides in the secreted. It is found in the extracellular space. In terms of biological role, extracellular signal peptide that regulates cell fate. May act with TDR as a ligand-receptor pair in a signal transduction pathway that represses tracheary element differentiation but promotes the formation of procambial cells adjacent to phloem cells in the veins in an auxin-dependent manner. Regulates the transition of protophloem cells from proliferation to differentiation, thus impinging on postembryonic growth capacity of the root meristem; this signaling pathway requires CRN and CLV2. The polypeptide is CLAVATA3/ESR (CLE)-related protein 41 (Arabidopsis thaliana (Mouse-ear cress)).